The primary structure comprises 696 residues: Serotransferrin (696 aa).

Transferrin-like domains lie at 6–332 (VRWC…NLRE) and 346–672 (VRWC…NLRK). Intrachain disulfides connect C9–C47 and C19–C38. R23 is subject to Dimethylated arginine. N25 is a glycosylation site (N-linked (GlcNAc...) asparagine). Fe(3+) is bound by residues D62 and Y94. Disulfide bonds link C117–C198, C157–C173, C160–C181, C170–C183, and C231–C245. Hydrogencarbonate contacts are provided by T119, R123, A125, and G126. A Fe(3+)-binding site is contributed by Y192. H253 lines the Fe(3+) pocket. Cystine bridges form between C343-C605, C349-C381, C359-C372, C406-C682, C423-C646, C456-C532, C480-C673, C490-C504, C501-C515, C572-C586, and C624-C629. S374 bears the Phosphoserine mark. Fe(3+) contacts are provided by D396 and Y431. Hydrogencarbonate contacts are provided by T458, R462, A464, and G465. The N-linked (GlcNAc...) asparagine glycan is linked to N497. Y526 contacts Fe(3+). H594 contributes to the Fe(3+) binding site. The residue at position 674 (S674) is a Phosphoserine.

It belongs to the transferrin family. As to quaternary structure, monomer. Part of a complex composed of SLC40A1/ferroportin, TF/transferrin and HEPH/hephaestin that transfers iron from cells to transferrin. Expressed by the liver and secreted in plasma.

The protein resides in the secreted. Its function is as follows. Transferrins are iron binding transport proteins which can bind two Fe(3+) ions in association with the binding of an anion, usually bicarbonate. It is responsible for the transport of iron from sites of absorption and heme degradation to those of storage and utilization. Serum transferrin may also have a further role in stimulating cell proliferation. The chain is Serotransferrin (TF) from Sus scrofa (Pig).